A 408-amino-acid polypeptide reads, in one-letter code: Imidazolonepropionase (408 aa).

Residues His73 and His75 each coordinate Fe(3+). Residues His73 and His75 each contribute to the Zn(2+) site. 4-imidazolone-5-propanoate contacts are provided by Arg82, Tyr145, and His178. Tyr145 contacts N-formimidoyl-L-glutamate. His243 lines the Fe(3+) pocket. Residue His243 coordinates Zn(2+). Gln246 contacts 4-imidazolone-5-propanoate. Asp318 is a binding site for Fe(3+). Residue Asp318 participates in Zn(2+) binding. The N-formimidoyl-L-glutamate site is built by Asn320 and Gly322. Position 323 (Ser323) interacts with 4-imidazolone-5-propanoate.

The protein belongs to the metallo-dependent hydrolases superfamily. HutI family. Requires Zn(2+) as cofactor. Fe(3+) serves as cofactor.

The protein resides in the cytoplasm. The catalysed reaction is 4-imidazolone-5-propanoate + H2O = N-formimidoyl-L-glutamate. It functions in the pathway amino-acid degradation; L-histidine degradation into L-glutamate; N-formimidoyl-L-glutamate from L-histidine: step 3/3. Functionally, catalyzes the hydrolytic cleavage of the carbon-nitrogen bond in imidazolone-5-propanoate to yield N-formimidoyl-L-glutamate. It is the third step in the universal histidine degradation pathway. The sequence is that of Imidazolonepropionase from Shewanella oneidensis (strain ATCC 700550 / JCM 31522 / CIP 106686 / LMG 19005 / NCIMB 14063 / MR-1).